The primary structure comprises 861 residues: MPSLLGLKCLGKLCSSEIGKVPSPERASLRNSHRRLLIEDLSVPETPDPAHRRRGTVIHLVYLYSAGCGPPELRFSSYDPSVAHPQDPHHSSEKPVIHCHKCGEPCKGEVLRVQTKHFHIKCFTCKVCGCDLAQGGFFIKNGDYLCTLDYQRMYGTRCHGCGEFVEGEVVTALGKTYHPNCFACTICKRPFPPGDRVTFNGRDCLCQLCAQPMSSSPKEASCSSNCAGCGRDIKNGQALLALDKQWHLGCFKCKSCGKVLTGEYISKDGSPYCEKDYQGLFGVKCEACHQFITGKVLEAGDKHYHPSCARCSRCNQMFTEGEEMYLQGSTVWHPDCKQSTKTEEKLRPPNIPRSSSDFFYPKSLIRRTGRSPALQLLSPPCLTNSNKNPRQPTRTSSESIYSRPGSSIPGSPGHTIYAKVDNEILDYKDLAAIPKVKAIYDIERPDLITYEPFYTSGYEDKQERQSLGESPRTLSPTPSAEGYQDVRDRMIHRSTSQGSINSPVYSRHSYTPTTSRSPQHFHRPELLSPGVHRWSPLRTSSFSSTHSDSRPNPPFRHHFLPHVKGNEPSSGRNSPLPYRPDSRPLTPTYAQAPKHFHVPDQGINIYRKPPIYKQHAALAAQSKASEDIIKFSKFPAAQAPDPNEIPKIETDHWPGPPSLAAVGTDPRRRSSGREEDEEELLRRRQLQEEQLMKLNSGLGQLILKEEMEKESRERASLASRYDSPLHSASHAPSSKTSSLPGYGKNGLHRPVSTDFAQYNSYGDISGGVRDYQTLPDGHMPAVRMDRGVSMPNMLEPKIFPYEMLMVTNRGRNKILRDVDRTRLERHLAPEVFWEIFGMSIQEFDKLPLWRRNDMKKKAKLF.

LIM zinc-binding domains are found at residues isoleucine 97–threonine 156, threonine 156–serine 216, serine 224–valine 283, and valine 283–glutamate 343. Residue serine 216 is modified to Phosphoserine. Residues leucine 374–histidine 414 form a disordered region. A compositionally biased stretch (polar residues) spans cysteine 381–isoleucine 400. Low complexity predominate over residues proline 404–glycine 413. The residue at position 411 (serine 411) is a Phosphoserine. Phosphotyrosine is present on residues tyrosine 417 and tyrosine 440. 2 disordered regions span residues glutamate 459–alanine 590 and phenylalanine 634–arginine 682. Phosphoserine is present on residues serine 466, serine 470, and serine 475. Residues leucine 467–proline 478 are compositionally biased toward polar residues. At threonine 477 the chain carries Phosphothreonine. Serine 479 is subject to Phosphoserine. Tyrosine 483 bears the Phosphotyrosine mark. Over residues arginine 493–proline 518 the composition is skewed to polar residues. Serine 496, serine 499, and serine 502 each carry phosphoserine. Residues proline 536–histidine 546 are compositionally biased toward low complexity. 2 positions are modified to phosphoserine: serine 582 and serine 671. The stretch at arginine 673–serine 723 forms a coiled coil. Lysine 704 participates in a covalent cross-link: Glycyl lysine isopeptide (Lys-Gly) (interchain with G-Cter in SUMO2). The tract at residues glutamate 713–histidine 748 is disordered. Phosphoserine is present on residues serine 723, serine 738, serine 760, and serine 789. A compositionally biased stretch (low complexity) spans proline 724–serine 738. One can recognise an HP domain in the interval methionine 793–phenylalanine 861.

Binds F-actin. Interacts with ABRA. Isoform 1 is detected in adult retina, where it is highly expressed in the ganglion layer. Detected in rod inner segment. Isoform 2 is highly expressed in adult retina, brain, kidney and heart. Isoform 3 is highly expressed in adult retina, brain, kidney, liver, skeletal muscle, spleen and heart. Detected in embryonic retina, brain, spinal cord, peripheral sensory ganglia and thymus.

It localises to the cytoplasm. The protein resides in the cytoskeleton. Functionally, may act as scaffold protein. May play a role in the development of the retina. Has been suggested to play a role in axon guidance. The polypeptide is Actin-binding LIM protein 1 (Ablim1) (Mus musculus (Mouse)).